A 239-amino-acid polypeptide reads, in one-letter code: uncharacterized protein (239 aa).

This is an uncharacterized protein from Saccharomyces cerevisiae (strain ATCC 204508 / S288c) (Baker's yeast).